A 219-amino-acid polypeptide reads, in one-letter code: Protein matrimony (219 aa).

A compositionally biased stretch (basic residues) spans 74–99 (PPAKAHPHPHQHQHHHHHHKHIHRTQ). The interval 74 to 104 (PPAKAHPHPHQHQHHHHHHKHIHRTQLKPPP) is disordered. The region spanning 159–219 (NHAANVEQIL…NRIMDVLQTL (61 aa)) is the SAM domain.

As to quaternary structure, interacts with polo. Interacts with cort. Post-translationally, probably ubiquitinated: degraded during the oocyte-to-embryo transition by the anaphase promoting complex/cyclosome (APC/C) containing cort protein.

The protein localises to the nucleus. It is found in the chromosome. Polo kinase inhibitor required to maintain G2 arrest in the meiotic cell cycle in females. Holds heterochromatically paired homologs together from the end of pachytene until metaphase I. Haploinsufficient locus for homologous achiasmate segregation and may be required for the maintenance of heterochromatic pairings. The polypeptide is Protein matrimony (mtrm) (Drosophila yakuba (Fruit fly)).